A 428-amino-acid polypeptide reads, in one-letter code: UPF0761 membrane protein Ppha_1623 (428 aa).

The next 6 membrane-spanning stretches (helical) occupy residues 52-72, 108-128, 148-168, 189-209, 216-233, and 252-272; these read LLSIVPILAVILSILNVFVVF, SVPILGGVFLFIIALFLISTV, FTLYWTVLTLGPVLIGSSLAA, LLSFFPFINSVAAFFLLYMLV, FVHAFSGALLAALLFELS, and GALSVIPMLFFWVYLGWIVVL.

Belongs to the UPF0761 family.

It is found in the cell inner membrane. In Pelodictyon phaeoclathratiforme (strain DSM 5477 / BU-1), this protein is UPF0761 membrane protein Ppha_1623.